The sequence spans 407 residues: Inhibin beta B chain (407 aa).

A signal peptide spans 1–28 (MDGLPGRALGAACLLLLAAGWLGPEAWG). Positions 27-60 (WGSPTPPPSPAAPPPPPPPGALGGSQDTCTSCGG) are disordered. A propeptide spanning residues 29–292 (SPTPPPSPAA…VDSRHRIRKR (264 aa)) is cleaved from the precursor. The segment covering 30–46 (PTPPPSPAAPPPPPPPG) has biased composition (pro residues). N-linked (GlcNAc...) asparagine glycosylation is present at Asn93. 4 disulfide bridges follow: Cys296/Cys304, Cys303/Cys372, Cys332/Cys404, and Cys336/Cys406.

Belongs to the TGF-beta family. In terms of assembly, dimeric, linked by one or more disulfide bonds. Inhibin B is a dimer of alpha and beta-B. Activin B is a homodimer of beta-B. Activin AB is a dimer of beta-A and beta-B. Interacts with FST and FSTL3.

The protein resides in the secreted. Its function is as follows. Inhibins and activins inhibit and activate, respectively, the secretion of follitropin by the pituitary gland. Inhibins/activins are involved in regulating a number of diverse functions such as hypothalamic and pituitary hormone secretion, gonadal hormone secretion, germ cell development and maturation, erythroid differentiation, insulin secretion, nerve cell survival, embryonic axial development or bone growth, depending on their subunit composition. Inhibins appear to oppose the functions of activins. Activin B is a dimer of alpha and beta-B that plays a role in several essential biological processes including embryonic development, stem cell maintenance and differentiation, haematopoiesis, cell proliferation and wound healing. Signals through type I receptor ACVR1C, abundantly expressed in pancreatic beta cells, and type II receptors like ACVR2A. Upon ligand binding, these receptors phosphorylate intracellular signaling mediators SMAD2 and SMAD3, which form a complex with SMAD4, translocate to the nucleus, and regulate gene expression. Plays a crucial role in the induction of hepcidin by inflammation through activation of ACVR1C and subsequent phosphorylation of SMAD1/5/8. Regulates adipocyte lipid metabolism by decreasing non-esterified fatty acids and glycerol release and increases intracellular triglyceride content. Stimulates wound healing by promoting cell migration and hair follicle regeneration through the JNK and ERK signaling pathways downstream of RHOA. In terms of biological role, inhibin B is a dimer of alpha and beta-B that plays a crucial role in the regulation of the reproductive system by inhibiting the secretion of follicle-stimulating hormone (FSH) from the anterior pituitary gland. Thereby, maintains reproductive homeostasis in both males and females. Acts as a more potent suppressor of FSH release than inhibin A. Functions as competitive receptor antagonist binding activin type II receptors with high affinity in the presence of the TGF-beta type III coreceptor/TGFBR3L. The chain is Inhibin beta B chain (INHBB) from Sus scrofa (Pig).